The chain runs to 188 residues: dCTP deaminase (188 aa).

DCTP contacts are provided by residues 111 to 116 (KSTYAR), 135 to 137 (TLE), Gln156, Tyr170, Lys179, and Gln180. Residue Glu137 is the Proton donor/acceptor of the active site.

Belongs to the dCTP deaminase family. In terms of assembly, homotrimer.

It catalyses the reaction dCTP + H2O + H(+) = dUTP + NH4(+). It functions in the pathway pyrimidine metabolism; dUMP biosynthesis; dUMP from dCTP (dUTP route): step 1/2. In terms of biological role, catalyzes the deamination of dCTP to dUTP. This Rickettsia typhi (strain ATCC VR-144 / Wilmington) protein is dCTP deaminase.